Here is a 62-residue protein sequence, read N- to C-terminus: Large ribosomal subunit protein uL30 (62 aa).

This sequence belongs to the universal ribosomal protein uL30 family. As to quaternary structure, part of the 50S ribosomal subunit.

This is Large ribosomal subunit protein uL30 from Herpetosiphon aurantiacus (strain ATCC 23779 / DSM 785 / 114-95).